A 192-amino-acid chain; its full sequence is MRIPIIKYEIPIPENVKVSYENNILKVSGPKGEVERKFYHPLIKLSVNDNKIILETYFATRREKRLINTWRSHIKNMLEGVQNPFVYRLKVCYTHFPMRVKLEGNKLIVENFLGEKAPIIKELPYLDKVKVKIEQNKDETEIVVESPDKEKAGIVASMIEQSTRFLHKRKDRRRFTDGIWLYYKAGKNILEE.

It belongs to the universal ribosomal protein uL6 family. As to quaternary structure, part of the 50S ribosomal subunit.

Its function is as follows. This protein binds to the 23S rRNA, and is important in its secondary structure. It is located near the subunit interface in the base of the L7/L12 stalk, and near the tRNA binding site of the peptidyltransferase center. The protein is Large ribosomal subunit protein uL6 of Nanoarchaeum equitans (strain Kin4-M).